Here is a 283-residue protein sequence, read N- to C-terminus: Bis(5'-nucleosyl)-tetraphosphatase, symmetrical (283 aa).

The protein belongs to the Ap4A hydrolase family.

The enzyme catalyses P(1),P(4)-bis(5'-adenosyl) tetraphosphate + H2O = 2 ADP + 2 H(+). In terms of biological role, hydrolyzes diadenosine 5',5'''-P1,P4-tetraphosphate to yield ADP. The sequence is that of Bis(5'-nucleosyl)-tetraphosphatase, symmetrical from Pseudomonas fluorescens (strain SBW25).